We begin with the raw amino-acid sequence, 663 residues long: MIDKRDDKPFKLKSKYKPSGDQPQAIESLVDNIEGGEKAQILLGATGTGKTYTMSQVISKVNKPTLVIAHNKTLAGQLYGEFKEFFPDNAVEYFVSYYDYYQPEAYVPSSDTYIEKDSSVNDEIDKLRHSATSSLLERNDVIVVASVSCIYGLGSPKEYADSAVSLRPGQEISRDTLLNQLVDIQFERNDIDFQRGCFRVRGDVVEVFPASRDEHAFRVEFFGDEIDRICEIESLTGKTIGEVDHLVLFPATHFVTNDEHMEQSIAKIQAELAEQLQLFESEGKLLEAQRLRQRTEYDIEMLREMGYTSGVENYSRHMDGRSPGEPPYTLLDFFPEDFLIMIDESHMTMGQIKGMYNGDQARKQMLVDYGFRLPSALDNRPLRREEFESHVHQIVYVSATPGEYEMSQTNTIIEQIIRPTGLLDPEIDVRPSMGQIDDLLGEINQRVARDERTFITTLTKKMAEDLTDYLKEMGVKVKYMHSDIKTLERTEIIRDLRLGVFDVLIGINLLREGIDVPEVSLVAILDADKEGFLRNERGLIQTIGRAARNVDGHVIMYADKMTDSMQRAIDETARRREIQIAYNKAHGIVPQTIKKDIRGLISISKTSHNDISKEEMDYESMSRGERKEAINALQKQMQEAAELLDFELAAQMRDLILELKLMD.

Residues 1 to 10 (MIDKRDDKPF) are compositionally biased toward basic and acidic residues. The interval 1 to 23 (MIDKRDDKPFKLKSKYKPSGDQP) is disordered. Residues 31 to 271 (DNIEGGEKAQ…EQSIAKIQAE (241 aa)) enclose the Helicase ATP-binding domain. 44–51 (GATGTGKT) serves as a coordination point for ATP. The Beta-hairpin motif lies at 97 to 120 (YYDYYQPEAYVPSSDTYIEKDSSV). A Helicase C-terminal domain is found at 435–601 (QIDDLLGEIN…TIKKDIRGLI (167 aa)). A UVR domain is found at 627 to 662 (KEAINALQKQMQEAAELLDFELAAQMRDLILELKLM).

It belongs to the UvrB family. In terms of assembly, forms a heterotetramer with UvrA during the search for lesions. Interacts with UvrC in an incision complex.

It localises to the cytoplasm. In terms of biological role, the UvrABC repair system catalyzes the recognition and processing of DNA lesions. A damage recognition complex composed of 2 UvrA and 2 UvrB subunits scans DNA for abnormalities. Upon binding of the UvrA(2)B(2) complex to a putative damaged site, the DNA wraps around one UvrB monomer. DNA wrap is dependent on ATP binding by UvrB and probably causes local melting of the DNA helix, facilitating insertion of UvrB beta-hairpin between the DNA strands. Then UvrB probes one DNA strand for the presence of a lesion. If a lesion is found the UvrA subunits dissociate and the UvrB-DNA preincision complex is formed. This complex is subsequently bound by UvrC and the second UvrB is released. If no lesion is found, the DNA wraps around the other UvrB subunit that will check the other stand for damage. The chain is UvrABC system protein B from Streptococcus pyogenes serotype M5 (strain Manfredo).